Consider the following 255-residue polypeptide: Diphthine--ammonia ligase (255 aa).

It belongs to the Diphthine--ammonia ligase family.

It catalyses the reaction diphthine-[translation elongation factor 2] + NH4(+) + ATP = diphthamide-[translation elongation factor 2] + AMP + diphosphate + H(+). The protein operates within protein modification; peptidyl-diphthamide biosynthesis. Its function is as follows. Amidase that catalyzes the last step of diphthamide biosynthesis using ammonium and ATP. Diphthamide biosynthesis consists in the conversion of an L-histidine residue in the translation elongation factor eEF-2 (EEF2) to diphthamide. The protein is Diphthine--ammonia ligase (dph6) of Danio rerio (Zebrafish).